The primary structure comprises 628 residues: Cytoplasmic dynein 1 intermediate chain 1 (628 aa).

Basic and acidic residues-rich tracts occupy residues 1–13 and 20–60; these read MSDK…ELER and QIRE…RETE. The interval 1 to 114 is disordered; the sequence is MSDKSDLKAE…RTLQWDTDPS (114 aa). The residue at position 2 (S2) is an N-acetylserine. At S50 the chain carries Phosphoserine. The span at 70 to 79 shows a compositional bias: pro residues; it reads PEPPLVPTPM. The segment covering 80–90 has biased composition (low complexity); it reads SPSSKSVSTPS. Phosphoserine is present on S83. T88 is modified (phosphothreonine). Phosphoserine occurs at positions 90, 94, and 97. The segment covering 105–114 has biased composition (polar residues); it reads RTLQWDTDPS. The segment at 130–146 is interaction with DYNLT1; the sequence is KLGVSKVTQVDFLPREV. The segment at 152 to 204 is disordered; the sequence is ETQTPLATHQSEEDEEDEEMVEPKIGHDSELENQEKKQETKEAPPRELTEEEK. A Phosphothreonine modification is found at T159. S162 and S180 each carry phosphoserine. Residues 172–204 are compositionally biased toward basic and acidic residues; it reads VEPKIGHDSELENQEKKQETKEAPPRELTEEEK. WD repeat units follow at residues 268–317, 321–361, 370–411, 420–460, 465–510, 513–553, and 559–598; these read SKHR…TTPE, HCQS…RTPV, AHTH…TPQE, SKPV…AGIG, GHQG…PLYS, DNAD…EVPT, and EGAS…VPHN. Phosphoserine is present on S618.

Belongs to the dynein intermediate chain family. In terms of assembly, homodimer. The cytoplasmic dynein 1 complex consists of two catalytic heavy chains (HCs) and a number of non-catalytic subunits presented by intermediate chains (ICs), light intermediate chains (LICs) and light chains (LCs); the composition seems to vary in respect to the IC, LIC and LC composition. The heavy chain homodimer serves as a scaffold for the probable homodimeric assembly of the respective non-catalytic subunits. The ICs and LICs bind directly to the HC dimer and the LCs assemble on the IC dimer. Interacts with DYNC1H1. Interacts with DYNLT1 and DYNLT3. Interacts with DCTN1. Interacts with DYNLL2. Interacts with MCRS1; the interaction is required for the proper distribution of centriolar satellites.

The protein resides in the cytoplasm. The protein localises to the chromosome. Its subcellular location is the centromere. It localises to the kinetochore. It is found in the cytoskeleton. The protein resides in the spindle pole. Acts as one of several non-catalytic accessory components of the cytoplasmic dynein 1 complex that are thought to be involved in linking dynein to cargos and to adapter proteins that regulate dynein function. Cytoplasmic dynein 1 acts as a motor for the intracellular retrograde motility of vesicles and organelles along microtubules. The intermediate chains mediate the binding of dynein to dynactin via its 150 kDa component (p150-glued) DCTN1. May play a role in mediating the interaction of cytoplasmic dynein with membranous organelles and kinetochores. The protein is Cytoplasmic dynein 1 intermediate chain 1 (Dync1i1) of Mus musculus (Mouse).